Consider the following 235-residue polypeptide: UPF0173 metal-dependent hydrolase Oant_3663 (235 aa).

This sequence belongs to the UPF0173 family.

This Brucella anthropi (strain ATCC 49188 / DSM 6882 / CCUG 24695 / JCM 21032 / LMG 3331 / NBRC 15819 / NCTC 12168 / Alc 37) (Ochrobactrum anthropi) protein is UPF0173 metal-dependent hydrolase Oant_3663.